The following is an 88-amino-acid chain: DNA-directed RNA polymerase subunit omega (88 aa).

The protein belongs to the RNA polymerase subunit omega family. The RNAP catalytic core consists of 2 alpha, 1 beta, 1 beta' and 1 omega subunit. When a sigma factor is associated with the core the holoenzyme is formed, which can initiate transcription.

The catalysed reaction is RNA(n) + a ribonucleoside 5'-triphosphate = RNA(n+1) + diphosphate. Functionally, promotes RNA polymerase assembly. Latches the N- and C-terminal regions of the beta' subunit thereby facilitating its interaction with the beta and alpha subunits. This chain is DNA-directed RNA polymerase subunit omega, found in Anaeromyxobacter sp. (strain Fw109-5).